A 1040-amino-acid polypeptide reads, in one-letter code: Multidrug resistance protein MdtB (1040 aa).

Helical transmembrane passes span 15–37, 345–362, 367–389, 396–418, 438–460, 472–494, 535–557, 867–889, 909–931, 968–990, and 1000–1022; these read LFILRPVATTLLMAAILLAGIIG, FELMLAIALVVMIIYLFL, ATIIPGVAVPLSLIGTFAVMVFL, LTLMALTIATGFVVDDAIVVIEN, GEIGFTIISLTFSLIAVLIPLLF, FAVTLAVAILISAVVSLTLTPMM, HPWLTLSVAFATLLLSVMLWIVI, VWLIVAAVVAMYIVLGVLYESFI, LIIAGSELDIIAIIGIILLIGIV, ILMTTLAALLGALPLMLSTGVGT, and MVGGLLVSQVLTLFTTPVIYLLF.

Belongs to the resistance-nodulation-cell division (RND) (TC 2.A.6) family. MdtB subfamily. Part of a tripartite efflux system composed of MdtA, MdtB and MdtC. MdtB forms a heteromultimer with MdtC.

It localises to the cell inner membrane. This is Multidrug resistance protein MdtB from Salmonella typhimurium (strain LT2 / SGSC1412 / ATCC 700720).